Consider the following 328-residue polypeptide: 4-hydroxythreonine-4-phosphate dehydrogenase (328 aa).

Residues H135 and T136 each contribute to the substrate site. A divalent metal cation-binding residues include H165, H210, and H265. Substrate is bound by residues K273, N282, and R291.

This sequence belongs to the PdxA family. Homodimer. Zn(2+) serves as cofactor. Mg(2+) is required as a cofactor. Requires Co(2+) as cofactor.

The protein resides in the cytoplasm. It catalyses the reaction 4-(phosphooxy)-L-threonine + NAD(+) = 3-amino-2-oxopropyl phosphate + CO2 + NADH. The protein operates within cofactor biosynthesis; pyridoxine 5'-phosphate biosynthesis; pyridoxine 5'-phosphate from D-erythrose 4-phosphate: step 4/5. Functionally, catalyzes the NAD(P)-dependent oxidation of 4-(phosphooxy)-L-threonine (HTP) into 2-amino-3-oxo-4-(phosphooxy)butyric acid which spontaneously decarboxylates to form 3-amino-2-oxopropyl phosphate (AHAP). This Pseudomonas aeruginosa (strain ATCC 15692 / DSM 22644 / CIP 104116 / JCM 14847 / LMG 12228 / 1C / PRS 101 / PAO1) protein is 4-hydroxythreonine-4-phosphate dehydrogenase.